Consider the following 405-residue polypeptide: Prostaglandin E2 receptor EP1 subtype (405 aa).

The Extracellular segment spans residues 1 to 39 (MSPYGLNLSLVDEATTCVTPRVPNTSVVLPTGGNGTSPA). Asn-7, Asn-24, and Asn-34 each carry an N-linked (GlcNAc...) asparagine glycan. A helical membrane pass occupies residues 40–62 (LPIFSMTLGAVSNVLALALLAQV). The Cytoplasmic portion of the chain corresponds to 63-80 (AGRLRRRRSTATFLLFVA). A helical membrane pass occupies residues 81–99 (SLLAIDLAGHVIPGALVLR). At 100–113 (LYTAGRAPAGGACH) the chain is on the extracellular side. An intrachain disulfide couples Cys-112 to Cys-190. The chain crosses the membrane as a helical span at residues 114-135 (FLGGCMVFFGLCPLLLGCGMAV). At 136–157 (ERCVGVTQPLIHAARVSVARAR) the chain is on the cytoplasmic side. The helical transmembrane segment at 158-179 (LALALLAAMALAVALLPLVHVG) threads the bilayer. At 180–202 (HYELQYPGTWCFISLGPPGGWRQ) the chain is on the extracellular side. A helical transmembrane segment spans residues 203–228 (ALLAGLFAGLGLAALLAALVCNTLSG). The Cytoplasmic segment spans residues 229 to 301 (LALLRARWRR…HAHDVEMVGQ (73 aa)). The helical transmembrane segment at 302 to 323 (LVGIMVVSCICWSPLLVLVVLA) threads the bilayer. Residues 324 to 337 (IGGWNSNSLQRPLF) lie on the Extracellular side of the membrane. The helical transmembrane segment at 338 to 357 (LAVRLASWNQILDPWVYILL) threads the bilayer. The Cytoplasmic segment spans residues 358–405 (RQAMLRQLLRLLPLRVSAKGGPTELSLTKSAWEASSLRSSRHSGFSHL).

This sequence belongs to the G-protein coupled receptor 1 family. Phosphorylated. Highly abundant in kidney and lung. Found in a lesser extent in spleen, colon, and thymus. Also expressed in uterine myometrium and endometrium.

The protein localises to the cell membrane. Its function is as follows. Receptor for prostaglandin E2 (PGE2). The activity of this receptor is mediated by G(q) proteins which activate a phosphatidylinositol-calcium second messenger system. May play a role as an important modulator of renal function. Implicated the smooth muscle contractile response to PGE2 in various tissues. Isoform 1 and isoform 2 have identical ligand binding properties, but isoform 2 lacks coupling to calcium mobilization and may therefore attenuate the action of PGE2 on tissues. The chain is Prostaglandin E2 receptor EP1 subtype (Ptger1) from Rattus norvegicus (Rat).